Here is a 141-residue protein sequence, read N- to C-terminus: 4-hydroxybenzoyl-CoA thioesterase (141 aa).

The active site involves D17. Residues W47, 59–61 (TPI), and K90 each bind substrate.

It belongs to the 4-hydroxybenzoyl-CoA thioesterase family. Homotetramer.

It catalyses the reaction 4-hydroxybenzoyl-CoA + H2O = 4-hydroxybenzoate + CoA + H(+). It participates in xenobiotic degradation; 4-chlorobenzoate degradation; 4-hydroxybenzoate from 4-chlorobenzoate: step 3/3. Unaffected by EDTA, Mg(2+), Mn(2+), Fe(2+), Ca(2+), Co(2+) and Zn(2+). Hydrolyzes 4-hydroxybenzoate-CoA, and to a lesser extent benzoyl-CoA and 4-chlorobenzoate-CoA. Not active against aliphatic acyl-CoA thioesters, including palmitoyl-CoA, hexanoyl-CoA and acetyl-CoA. The chain is 4-hydroxybenzoyl-CoA thioesterase from Pseudomonas sp. (strain CBS-3).